A 485-amino-acid polypeptide reads, in one-letter code: Probable outer membrane usher protein LpfC' (485 aa).

The protein belongs to the fimbrial export usher family.

It localises to the cell outer membrane. Part of the lpfABCC'DE fimbrial operon. LP fimbriae may participate in the interaction with eukaryotic cells by assisting in microcolony formation. Could be involved in the export and assembly of the fimbrial subunits across the outer membrane. In Escherichia coli O157:H7, this protein is Probable outer membrane usher protein LpfC' (lpfC').